Here is a 511-residue protein sequence, read N- to C-terminus: Cobyric acid synthase (511 aa).

One can recognise a GATase cobBQ-type domain in the interval 251 to 443 (LLDIAIICLP…IHGIFDNDIF (193 aa)). C332 functions as the Nucleophile in the catalytic mechanism. H435 is a catalytic residue.

The protein belongs to the CobB/CobQ family. CobQ subfamily.

It functions in the pathway cofactor biosynthesis; adenosylcobalamin biosynthesis. In terms of biological role, catalyzes amidations at positions B, D, E, and G on adenosylcobyrinic A,C-diamide. NH(2) groups are provided by glutamine, and one molecule of ATP is hydrogenolyzed for each amidation. This Listeria innocua serovar 6a (strain ATCC BAA-680 / CLIP 11262) protein is Cobyric acid synthase.